The primary structure comprises 370 residues: Cyclin-A3-4 (370 aa).

The protein belongs to the cyclin family. Cyclin AB subfamily. Interacts with FZR2/CCS52A1, FZR1/CCS52A2 and FZR3/CCS52B.

The chain is Cyclin-A3-4 (CYCA3-4) from Arabidopsis thaliana (Mouse-ear cress).